Here is a 366-residue protein sequence, read N- to C-terminus: GTP cyclohydrolase 1 type 2 homolog (366 aa).

Zn(2+) contacts are provided by histidine 64, histidine 65, aspartate 102, histidine 326, and glutamate 329.

Belongs to the GTP cyclohydrolase I type 2/NIF3 family. In terms of assembly, homohexamer.

This is GTP cyclohydrolase 1 type 2 homolog from Staphylococcus aureus (strain MSSA476).